Consider the following 78-residue polypeptide: Putative defensin-like protein 202 (78 aa).

An N-terminal signal peptide occupies residues 1-29 (MAKTQNFVCFTAVLLILILVSTEIPMIEG). 3 disulfides stabilise this stretch: Cys44/Cys65, Cys49/Cys74, and Cys53/Cys76.

Belongs to the DEFL family.

Its subcellular location is the secreted. The protein is Putative defensin-like protein 202 of Arabidopsis thaliana (Mouse-ear cress).